A 156-amino-acid polypeptide reads, in one-letter code: uncharacterized protein (156 aa).

This sequence to L.lactis TrpF C-terminal region.

This is an uncharacterized protein from Bacillus subtilis (strain 168).